Reading from the N-terminus, the 209-residue chain is Outer-membrane lipoprotein carrier protein (209 aa).

Positions 1 to 24 (MTRYVISRLSAIALLALAPALALA) are cleaved as a signal peptide.

The protein belongs to the LolA family. Monomer.

It localises to the periplasm. Functionally, participates in the translocation of lipoproteins from the inner membrane to the outer membrane. Only forms a complex with a lipoprotein if the residue after the N-terminal Cys is not an aspartate (The Asp acts as a targeting signal to indicate that the lipoprotein should stay in the inner membrane). The protein is Outer-membrane lipoprotein carrier protein of Bordetella avium (strain 197N).